A 203-amino-acid chain; its full sequence is Peptidyl-tRNA hydrolase (203 aa).

Tyrosine 14 provides a ligand contact to tRNA. Histidine 19 serves as the catalytic Proton acceptor. Residues tyrosine 64, asparagine 66, and asparagine 112 each contribute to the tRNA site.

Belongs to the PTH family. Monomer.

The protein localises to the cytoplasm. The catalysed reaction is an N-acyl-L-alpha-aminoacyl-tRNA + H2O = an N-acyl-L-amino acid + a tRNA + H(+). In terms of biological role, hydrolyzes ribosome-free peptidyl-tRNAs (with 1 or more amino acids incorporated), which drop off the ribosome during protein synthesis, or as a result of ribosome stalling. Functionally, catalyzes the release of premature peptidyl moieties from peptidyl-tRNA molecules trapped in stalled 50S ribosomal subunits, and thus maintains levels of free tRNAs and 50S ribosomes. The protein is Peptidyl-tRNA hydrolase of Methylobacterium sp. (strain 4-46).